The sequence spans 203 residues: ATP-dependent Clp protease proteolytic subunit 1 (203 aa).

Catalysis depends on Ser-101, which acts as the Nucleophile. Residue His-126 is part of the active site.

It belongs to the peptidase S14 family. In terms of assembly, fourteen ClpP subunits assemble into 2 heptameric rings which stack back to back to give a disk-like structure with a central cavity, resembling the structure of eukaryotic proteasomes.

The protein localises to the cytoplasm. It catalyses the reaction Hydrolysis of proteins to small peptides in the presence of ATP and magnesium. alpha-casein is the usual test substrate. In the absence of ATP, only oligopeptides shorter than five residues are hydrolyzed (such as succinyl-Leu-Tyr-|-NHMec, and Leu-Tyr-Leu-|-Tyr-Trp, in which cleavage of the -Tyr-|-Leu- and -Tyr-|-Trp bonds also occurs).. Functionally, cleaves peptides in various proteins in a process that requires ATP hydrolysis. Has a chymotrypsin-like activity. Plays a major role in the degradation of misfolded proteins. This is ATP-dependent Clp protease proteolytic subunit 1 from Synechococcus sp. (strain JA-2-3B'a(2-13)) (Cyanobacteria bacterium Yellowstone B-Prime).